The following is a 326-amino-acid chain: Tagatose 1,6-diphosphate aldolase (326 aa).

This sequence belongs to the aldolase LacD family.

It carries out the reaction D-tagatofuranose 1,6-bisphosphate = D-glyceraldehyde 3-phosphate + dihydroxyacetone phosphate. It functions in the pathway carbohydrate metabolism; D-tagatose 6-phosphate degradation; D-glyceraldehyde 3-phosphate and glycerone phosphate from D-tagatose 6-phosphate: step 2/2. This Staphylococcus aureus (strain MSSA476) protein is Tagatose 1,6-diphosphate aldolase.